We begin with the raw amino-acid sequence, 90 residues long: uncharacterized protein (90 aa).

This is an uncharacterized protein from Bacillus subtilis (strain 168).